The chain runs to 312 residues: Ornithine carbamoyltransferase (312 aa).

Carbamoyl phosphate-binding positions include 50-53 (STRT), Q77, R101, and 128-131 (HPCQ). L-ornithine is bound by residues N159, D223, and 227-228 (SM). Carbamoyl phosphate contacts are provided by residues 263–264 (CL) and R291.

Belongs to the aspartate/ornithine carbamoyltransferase superfamily. OTCase family.

It is found in the cytoplasm. It carries out the reaction carbamoyl phosphate + L-ornithine = L-citrulline + phosphate + H(+). Its pathway is amino-acid biosynthesis; L-arginine biosynthesis; L-arginine from L-ornithine and carbamoyl phosphate: step 1/3. In terms of biological role, reversibly catalyzes the transfer of the carbamoyl group from carbamoyl phosphate (CP) to the N(epsilon) atom of ornithine (ORN) to produce L-citrulline. In Acidothermus cellulolyticus (strain ATCC 43068 / DSM 8971 / 11B), this protein is Ornithine carbamoyltransferase.